The sequence spans 755 residues: Metabotropic glutamate receptor-like protein B (755 aa).

The first 23 residues, 1-23, serve as a signal peptide directing secretion; the sequence is MKNLISIILLILIFFNYSKFVKS. Asparagine 16, asparagine 183, and asparagine 273 each carry an N-linked (GlcNAc...) asparagine glycan. At 24-385 the chain is on the extracellular side; it reads KNCKIAVLLS…VDYSSSMKLG (362 aa). The helical transmembrane segment at 386–406 threads the bilayer; the sequence is ITITSSICIFLCIISIIIVLV. The Cytoplasmic portion of the chain corresponds to 407–417; that stretch reads FRTARIIKSAS. The chain crosses the membrane as a helical span at residues 418-438; sequence PAFLFLILMGCILIFIGCIIF. The Extracellular portion of the chain corresponds to 439 to 455; the sequence is SQSPNEGTCRARVWLLS. Residues 456–476 traverse the membrane as a helical segment; that stretch reads IGYTIFLGSLLVKNWRIWLLF. Topologically, residues 477–492 are cytoplasmic; sequence DNPKLKKRSITNWKLY. The chain crosses the membrane as a helical span at residues 493–513; it reads PWVAGILAADVLILAFWQGLG. Residues 514 to 541 lie on the Extracellular side of the membrane; the sequence is NIRSESRIGIDSLTKYQYTNVCSSNDQG. Residues 542–562 form a helical membrane-spanning segment; that stretch reads SIALYILLVFHGIKLLVACFI. Residues 563 to 578 are Cytoplasmic-facing; sequence SFKIKVVDIDEFNESK. Residues 579–599 form a helical membrane-spanning segment; it reads PIASSVYIITFCLFIVIPLMV. Residues 600–607 lie on the Extracellular side of the membrane; that stretch reads SPQSVTSQ. The helical transmembrane segment at 608–628 threads the bilayer; that stretch reads VTTICVCAIVTTLISIILLFG. Topologically, residues 629–755 are cytoplasmic; it reads SKFYKMITQG…GEVEIDSNNL (127 aa). Disordered regions lie at residues 656-676 and 691-729; these read QSLE…EENG and FSSD…NIEE. Acidic residues predominate over residues 694 to 710; it reads DTEDDENETQQIDEEKD.

It in the N-terminal section; belongs to the BMP lipoprotein family. In the C-terminal section; belongs to the G-protein coupled receptor 3 family. GABA-B receptor subfamily.

The protein localises to the membrane. In Dictyostelium discoideum (Social amoeba), this protein is Metabotropic glutamate receptor-like protein B (grlB).